A 444-amino-acid chain; its full sequence is Chitinase-like protein Idgf1 (444 aa).

The signal sequence occupies residues M1–G20. One can recognise a GH18 domain in the interval K29–L444. C33 and C60 are joined by a disulfide. Residues N213, N225, and N335 are each glycosylated (N-linked (GlcNAc...) asparagine). A disulfide bridge connects residues C346 and C429.

It belongs to the glycosyl hydrolase 18 family. IDGF subfamily. In terms of processing, glycosylated.

It is found in the secreted. In terms of biological role, cooperates with insulin-like peptides to stimulate the proliferation, polarization and motility of imaginal disk cells. May act by stabilizing the binding of insulin-like peptides to its receptor through a simultaneous interaction with both molecules to form a multiprotein signaling complex. The chain is Chitinase-like protein Idgf1 (Idgf1) from Glossina morsitans morsitans (Savannah tsetse fly).